We begin with the raw amino-acid sequence, 798 residues long: Phenylalanine--tRNA ligase beta subunit (798 aa).

Residues 38–148 (IGNYEKVVVG…PEAPVGEKIE (111 aa)) form the tRNA-binding domain. The B5 domain maps to 400–475 (FTPKVIAVSL…RYLGYNNFPD (76 aa)). Residues D453, D459, E462, and E463 each coordinate Mg(2+). The 94-residue stretch at 703–796 (SPYPEVKRDI…LEAKTGAKLR (94 aa)) folds into the FDX-ACB domain.

This sequence belongs to the phenylalanyl-tRNA synthetase beta subunit family. Type 1 subfamily. In terms of assembly, tetramer of two alpha and two beta subunits. Mg(2+) serves as cofactor.

It localises to the cytoplasm. It carries out the reaction tRNA(Phe) + L-phenylalanine + ATP = L-phenylalanyl-tRNA(Phe) + AMP + diphosphate + H(+). The polypeptide is Phenylalanine--tRNA ligase beta subunit (Carboxydothermus hydrogenoformans (strain ATCC BAA-161 / DSM 6008 / Z-2901)).